A 100-amino-acid polypeptide reads, in one-letter code: MRGETGVSIKNPRPSRPFSCFWRKGDVENIRKSDIGNEKKIDAKFNRLQYNLYYKPLSHHKAGLLYKELFFRSCFSYTTCSLDFQGKRHQVERKAVDIVL.

As to quaternary structure, may interact with ribosomes.

This is an uncharacterized protein from Saccharomyces cerevisiae (strain ATCC 204508 / S288c) (Baker's yeast).